The following is a 103-amino-acid chain: Small ribosomal subunit protein uS10 (103 aa).

This sequence belongs to the universal ribosomal protein uS10 family. Part of the 30S ribosomal subunit.

Involved in the binding of tRNA to the ribosomes. The sequence is that of Small ribosomal subunit protein uS10 from Cellvibrio japonicus (strain Ueda107) (Pseudomonas fluorescens subsp. cellulosa).